Here is a 145-residue protein sequence, read N- to C-terminus: Hemoglobin fetal subunit beta (145 aa).

The Globin domain maps to Met1–His145. Positions 62 and 91 each coordinate heme b.

This sequence belongs to the globin family. As to quaternary structure, heterotetramer of two alpha chains and two beta chains.

In Ovis aries (Sheep), this protein is Hemoglobin fetal subunit beta.